We begin with the raw amino-acid sequence, 198 residues long: Ribonuclease HII (198 aa).

In terms of domain architecture, RNase H type-2 spans Leu-3–Lys-198. Residues Asp-9, Glu-10, and Asp-104 each coordinate a divalent metal cation.

The protein belongs to the RNase HII family. Requires Mn(2+) as cofactor. The cofactor is Mg(2+).

Its subcellular location is the cytoplasm. It catalyses the reaction Endonucleolytic cleavage to 5'-phosphomonoester.. In terms of biological role, endonuclease that specifically degrades the RNA of RNA-DNA hybrids. In Pyrobaculum arsenaticum (strain DSM 13514 / JCM 11321 / PZ6), this protein is Ribonuclease HII.